The primary structure comprises 244 residues: Cobalt transport protein CbiM (244 aa).

The signal sequence occupies residues 1–20 (MRKITFIAALLSLLPRYALA). Helical transmembrane passes span 31–51 (KWCLLWYSIYIPFLMAGLIYI), 63–83 (ILLGFAGAFVFALSALKLPSV), 95–115 (LGAILLGPLPMAVIGGIVLLF), 117–137 (ALLLAHGGITTLGANAFSMAV), 161–181 (VFLGAASGDLMTYIITSLQLA), and 201–221 (IFAVTQLPLAIGEGILTVIVL).

This sequence belongs to the CbiM family. As to quaternary structure, forms an energy-coupling factor (ECF) transporter complex composed of an ATP-binding protein (A component, CbiO), a transmembrane protein (T component, CbiQ) and 2 possible substrate-capture proteins (S components, CbiM and CbiN) of unknown stoichimetry.

It localises to the cell membrane. The protein operates within cofactor biosynthesis; adenosylcobalamin biosynthesis. Functionally, part of the energy-coupling factor (ECF) transporter complex CbiMNOQ involved in cobalt import. This is Cobalt transport protein CbiM from Thermosediminibacter oceani (strain ATCC BAA-1034 / DSM 16646 / JW/IW-1228P).